Here is a 168-residue protein sequence, read N- to C-terminus: S-ribosylhomocysteine lyase (168 aa).

The Fe cation site is built by His-54, His-58, and Cys-128.

Belongs to the LuxS family. In terms of assembly, homodimer. Requires Fe cation as cofactor.

The catalysed reaction is S-(5-deoxy-D-ribos-5-yl)-L-homocysteine = (S)-4,5-dihydroxypentane-2,3-dione + L-homocysteine. Involved in the synthesis of autoinducer 2 (AI-2) which is secreted by bacteria and is used to communicate both the cell density and the metabolic potential of the environment. The regulation of gene expression in response to changes in cell density is called quorum sensing. Catalyzes the transformation of S-ribosylhomocysteine (RHC) to homocysteine (HC) and 4,5-dihydroxy-2,3-pentadione (DPD). This is S-ribosylhomocysteine lyase from Actinobacillus succinogenes (strain ATCC 55618 / DSM 22257 / CCUG 43843 / 130Z).